The sequence spans 171 residues: HTH-type transcriptional regulator AldR (171 aa).

Positions 1 to 14 are enriched in polar residues; that stretch reads MSEGSSITGVQTPG. The tract at residues 1–21 is disordered; sequence MSEGSSITGVQTPGSPKDVRA. In terms of domain architecture, HTH asnC-type spans 24-85; the sequence is LDDIDRRILL…DIDPAAVGLG (62 aa). The H-T-H motif DNA-binding region spans 43-62; the sequence is NSALAEMVGIAPSTCHGRVR.

In terms of assembly, homodimer in the absence of L-alanine. Homooctamer in the presence of L-alanine. Homotetramers in the presence of L-cysteine.

With respect to regulation, in the presence of alanine, AldR changes its quaternary structure from a homodimer to an octamer with an open-ring conformation. The binding affinity of AldR for the ald control region is increased significantly by L-alanine. In vitro, L-cysteine also increases the binding affinity of AldR for the target DNA. Transcriptional regulator that might play a role under hypoxic conditions. Regulates the expression of ald, which encodes L-alanine dehydrogenase. Serves as both an activator for ald expression in the presence of L-alanine and a repressor in the absence of L-alanine. Acts by binding directly to the upstream region of the ald gene. Four AldR-binding sites (O2, O1, O4 and O3) were identified upstream of the ald gene. O2, O1 and O4 are required for the induction of ald expression by alanine, while O3 is directly involved in the repression of ald expression, by occluding the access of RNA polymerase to the ald promoter. In addition to O3, both O1 and O4 are also necessary for full repression of ald expression in the absence of alanine. This Mycolicibacterium smegmatis (strain ATCC 700084 / mc(2)155) (Mycobacterium smegmatis) protein is HTH-type transcriptional regulator AldR.